The sequence spans 567 residues: DNA ligase B (567 aa).

Residue K132 is the N6-AMP-lysine intermediate of the active site.

This sequence belongs to the NAD-dependent DNA ligase family. LigB subfamily.

The catalysed reaction is NAD(+) + (deoxyribonucleotide)n-3'-hydroxyl + 5'-phospho-(deoxyribonucleotide)m = (deoxyribonucleotide)n+m + AMP + beta-nicotinamide D-nucleotide.. In terms of biological role, catalyzes the formation of phosphodiester linkages between 5'-phosphoryl and 3'-hydroxyl groups in double-stranded DNA using NAD as a coenzyme and as the energy source for the reaction. This Yersinia pseudotuberculosis serotype IB (strain PB1/+) protein is DNA ligase B.